The sequence spans 76 residues: Conotoxin VnMEKL-021 (76 aa).

Positions 1–19 (MQKLTILLLVAAVLMSTQA) are cleaved as a signal peptide. Residues 20–37 (LIKGGGEKRPKEKIKFLS) constitute a propeptide that is removed on maturation. Disulfide bonds link C51/C65, C58/C69, and C64/C73.

It belongs to the conotoxin O2 superfamily. In terms of tissue distribution, expressed by the venom duct.

The protein resides in the secreted. This chain is Conotoxin VnMEKL-021, found in Conus ventricosus (Mediterranean cone).